The primary structure comprises 657 residues: tRNA 5-methylaminomethyl-2-thiouridine biosynthesis bifunctional protein MnmC (657 aa).

Residues 1–239 (MTDRIVPATL…KRAMLVGEFA (239 aa)) are tRNA (mnm(5)s(2)U34)-methyltransferase. An FAD-dependent cmnm(5)s(2)U34 oxidoreductase region spans residues 263 to 657 (IGAGLAGCAV…VRALRHGRVA (395 aa)).

It in the N-terminal section; belongs to the methyltransferase superfamily. tRNA (mnm(5)s(2)U34)-methyltransferase family. This sequence in the C-terminal section; belongs to the DAO family. The cofactor is FAD.

The protein localises to the cytoplasm. The catalysed reaction is 5-aminomethyl-2-thiouridine(34) in tRNA + S-adenosyl-L-methionine = 5-methylaminomethyl-2-thiouridine(34) in tRNA + S-adenosyl-L-homocysteine + H(+). In terms of biological role, catalyzes the last two steps in the biosynthesis of 5-methylaminomethyl-2-thiouridine (mnm(5)s(2)U) at the wobble position (U34) in tRNA. Catalyzes the FAD-dependent demodification of cmnm(5)s(2)U34 to nm(5)s(2)U34, followed by the transfer of a methyl group from S-adenosyl-L-methionine to nm(5)s(2)U34, to form mnm(5)s(2)U34. In Burkholderia pseudomallei (strain 668), this protein is tRNA 5-methylaminomethyl-2-thiouridine biosynthesis bifunctional protein MnmC.